A 294-amino-acid chain; its full sequence is MSNQDLLYRYLFEEYEVRGELVQLDHTYRHVVEAQSYPVQVQKLLGELLVATSLLTATLKFEGSITVQLQGDGPVRLAVINGDNNQQLRGVARYEGELPSDGKLQSLIGNGQLIITITPEQGERYQGIIALDADTLAGCLEHYFAQSEQLATKLWIRTGYHQGEPRAAGILLQALPAQSEDHSADFDHLTQLTATIKDEELFGLEAEEILYRLYHQDKVRVFDPQAVEFRCTCSRARCEGALLQIEKEEVLDMVQELGKIDMHCDYCGAQYQFDGIDVETLFSRAPDNDANKLH.

2 disulfide bridges follow: Cys-231–Cys-233 and Cys-264–Cys-267.

This sequence belongs to the HSP33 family. Post-translationally, under oxidizing conditions two disulfide bonds are formed involving the reactive cysteines. Under reducing conditions zinc is bound to the reactive cysteines and the protein is inactive.

Its subcellular location is the cytoplasm. Redox regulated molecular chaperone. Protects both thermally unfolding and oxidatively damaged proteins from irreversible aggregation. Plays an important role in the bacterial defense system toward oxidative stress. The sequence is that of 33 kDa chaperonin from Aeromonas salmonicida (strain A449).